The sequence spans 402 residues: Succinyl-diaminopimelate desuccinylase (402 aa).

Residue His88 coordinates Zn(2+). The active site involves Asp90. Position 121 (Asp121) interacts with Zn(2+). The active-site Proton acceptor is Glu155. Zn(2+)-binding residues include Glu156, Glu184, and His374.

The protein belongs to the peptidase M20A family. DapE subfamily. Homodimer. The cofactor is Zn(2+). Co(2+) is required as a cofactor.

It catalyses the reaction N-succinyl-(2S,6S)-2,6-diaminopimelate + H2O = (2S,6S)-2,6-diaminopimelate + succinate. Its pathway is amino-acid biosynthesis; L-lysine biosynthesis via DAP pathway; LL-2,6-diaminopimelate from (S)-tetrahydrodipicolinate (succinylase route): step 3/3. Functionally, catalyzes the hydrolysis of N-succinyl-L,L-diaminopimelic acid (SDAP), forming succinate and LL-2,6-diaminopimelate (DAP), an intermediate involved in the bacterial biosynthesis of lysine and meso-diaminopimelic acid, an essential component of bacterial cell walls. This is Succinyl-diaminopimelate desuccinylase from Psychrobacter sp. (strain PRwf-1).